The sequence spans 846 residues: SLIT and NTRK-like protein 2 (846 aa).

A signal peptide spans 1 to 21 (MLSGVWFLSVLTVAGILQTES). Over 22–622 (RKTAKDICKI…LHTEVPLSVL (601 aa)) the chain is Extracellular. Cystine bridges form between C29–C35 and C33–C46. 6 LRR repeats span residues 63-84 (RIYQLFLNGNLLTRLYPNEFVN), 87-108 (NAVTLHLGNNGLQEIRPGAFSG), 111-132 (TLKRLHLNNNKLEVLREDTFLG), 135-156 (SLEYLQADYNYISTIEAGAFSK), 159-180 (KLKVLILNDNLLLSLPSNVFRF), and 182-203 (LLTHLDLRGNRLKVMPFAGVLE). An N-linked (GlcNAc...) asparagine glycan is attached at N84. A required for interaction with PTPRD region spans residues 167–215 (DNLLLSLPSNVFRFVLLTHLDLRGNRLKVMPFAGVLEHIGGIMEIQLEE). Residues 216–265 (NPWNCTCDLLPLKAWLDTITVFVGEIVCETPFRLHGKDVTQLTRQDLCPR) form the LRRCT 1 domain. N-linked (GlcNAc...) asparagine glycosylation occurs at N219. 2 disulfides stabilise this stretch: C220–C243 and C222–C263. A disordered region spans residues 261–322 (DLCPRKSASG…TPRVTVSKDR (62 aa)). Composition is skewed to low complexity over residues 267-276 (SASGDSSQRS) and 285-300 (RLTPTTNPALNPTRAP). The LRRNT domain occupies 332-374 (QTKSPVALTCPSSCVCTSQSSDNGLNVNCQERKFTNISDLQPK). LRR repeat units lie at residues 377 to 398 (SPKKLYLTGNYLQTVYKNDLLE), 401 to 422 (SLDLLHLGNNRIAVIQEGAFTN), 425 to 446 (SLRRLYLNGNYLEVLYPSMFDG), 449 to 470 (SLQYLYLEYNVIKEIKPLTFDA), 473 to 494 (NLQLLFLNNNLLRSLPDNIFGG), and 496 to 517 (ALTRLNLRNNHFSHLPVKGVLD). N422 carries an N-linked (GlcNAc...) asparagine glycan. In terms of domain architecture, LRRCT 2 spans 530–581 (NPWDCTCDIMGLKDWTEHANSPVIINEVTCESPAKHAGEILKFLGREAICPE). A helical transmembrane segment spans residues 623-643 (ILGLLVVFILSVCFGAGLFVF). At 644–846 (VLKRRKGVPN…LEKQTAISQL (203 aa)) the chain is on the cytoplasmic side. Y757 carries the phosphotyrosine modification.

It belongs to the SLITRK family. Interacts with PTPRD; this interaction is PTPRD splicing-dependent and may induce pre-synaptic differentiation. Interacts with NTRK2. As to expression, in the adult, significant expression is detected only in the brain. Broadly expressed in embryonic brain with highest expression in ventricular layer, subventricular zone, cortical plate, pyramidal layer of hippocampus, subicular neuroepithelium, thalamus, hypothalamus and spinal cord.

Its subcellular location is the membrane. It localises to the cell membrane. The protein localises to the cell projection. The protein resides in the dendrite. It is involved in synaptogenesis. Promotes excitatory synapse differentiation. Suppresses neurite outgrowth. Involved in the negative regulation of NTRK2. In Mus musculus (Mouse), this protein is SLIT and NTRK-like protein 2 (Slitrk2).